A 336-amino-acid polypeptide reads, in one-letter code: Biotin synthase (336 aa).

The region spanning Asn54 to Arg281 is the Radical SAM core domain. The [4Fe-4S] cluster site is built by Cys69, Cys73, and Cys76. Positions 113, 144, 204, and 276 each coordinate [2Fe-2S] cluster.

The protein belongs to the radical SAM superfamily. Biotin synthase family. Homodimer. Requires [4Fe-4S] cluster as cofactor. [2Fe-2S] cluster serves as cofactor.

It catalyses the reaction (4R,5S)-dethiobiotin + (sulfur carrier)-SH + 2 reduced [2Fe-2S]-[ferredoxin] + 2 S-adenosyl-L-methionine = (sulfur carrier)-H + biotin + 2 5'-deoxyadenosine + 2 L-methionine + 2 oxidized [2Fe-2S]-[ferredoxin]. It participates in cofactor biosynthesis; biotin biosynthesis; biotin from 7,8-diaminononanoate: step 2/2. In terms of biological role, catalyzes the conversion of dethiobiotin (DTB) to biotin by the insertion of a sulfur atom into dethiobiotin via a radical-based mechanism. The chain is Biotin synthase from Burkholderia pseudomallei (strain 1106a).